A 368-amino-acid chain; its full sequence is Peptide chain release factor 2 (368 aa).

The residue at position 248 (Gln-248) is an N5-methylglutamine.

This sequence belongs to the prokaryotic/mitochondrial release factor family. Methylated by PrmC. Methylation increases the termination efficiency of RF2.

The protein localises to the cytoplasm. Its function is as follows. Peptide chain release factor 2 directs the termination of translation in response to the peptide chain termination codons UGA and UAA. The polypeptide is Peptide chain release factor 2 (Corynebacterium glutamicum (strain R)).